Here is a 345-residue protein sequence, read N- to C-terminus: Dimethyladenosine transferase 1, mitochondrial (345 aa).

Residues 1–27 (MAAPGKLSTCRLPPLPTIREIIKLFRL) constitute a mitochondrion transit peptide. Leucine 38, glycine 63, glutamate 85, lysine 86, aspartate 111, valine 112, and asparagine 141 together coordinate S-adenosyl-L-methionine.

Belongs to the class I-like SAM-binding methyltransferase superfamily. rRNA adenine N(6)-methyltransferase family. KsgA subfamily. As to quaternary structure, interacts with mitochondrial RNA polymerase POLRMT. Interacts with TFAM. Bound to the maturing mtSSU until the late stages of assembly.

The protein resides in the mitochondrion. It carries out the reaction adenosine(N)/adenosine(N+1) in rRNA + 4 S-adenosyl-L-methionine = N(6)-dimethyladenosine(N)/N(6)-dimethyladenosine(N+1) in rRNA + 4 S-adenosyl-L-homocysteine + 4 H(+). Its function is as follows. Mitochondrial methyltransferase which uses S-adenosyl methionine to dimethylate two highly conserved adjacent adenosine residues (A1583 and A1584) within the loop of helix 45 at the 3-prime end of 12S rRNA, thereby regulating the assembly or stability of the small subunit of the mitochondrial ribosome. Also required for basal transcription of mitochondrial DNA, probably via its interaction with POLRMT and TFAM. Stimulates transcription independently of the methyltransferase activity. The polypeptide is Dimethyladenosine transferase 1, mitochondrial (TFB1M) (Macaca fascicularis (Crab-eating macaque)).